Reading from the N-terminus, the 510-residue chain is Peptide transporter imqJ (510 aa).

3 helical membrane passes run 1–21 (MVNQ…AVVA), 31–51 (IIFS…SSLP), and 57–77 (GISL…TGGI). An N-linked (GlcNAc...) asparagine glycan is attached at Asn80. 4 helical membrane-spanning segments follow: residues 116–136 (IFTT…LITI), 143–163 (FSAA…IVLV), 231–251 (IFIL…NFIS), and 269–289 (IDPI…FPFL). A Fe2OG dioxygenase domain is found at 348-468 (PAASEIRLLY…RCSSVFFFKA (121 aa)). Positions 377 and 379 each coordinate Fe cation. Asn421 carries N-linked (GlcNAc...) asparagine glycosylation. Position 439 (His439) interacts with Fe cation. A 2-oxoglutarate-binding site is contributed by Arg459.

This sequence belongs to the major facilitator superfamily. Proton-dependent oligopeptide transporter (POT/PTR) (TC 2.A.17) family.

It localises to the membrane. Functionally, peptide transporter; part of the gene cluster that mediates the biosynthesis of imizoquins A to D, tripeptide-derived alkaloids that serve a protective role against oxidative stress that are essential for normal germination. The polypeptide is Peptide transporter imqJ (Aspergillus flavus (strain ATCC 200026 / FGSC A1120 / IAM 13836 / NRRL 3357 / JCM 12722 / SRRC 167)).